The primary structure comprises 986 residues: Bone morphogenetic protein 1 (986 aa).

The first 22 residues, 1–22 (MPGVARLPLLLGLLLLPRPGRP), serve as a signal peptide directing secretion. The propeptide occupies 23–120 (LDLADYTYDL…RWRGRSRSRR (98 aa)). The segment at 83 to 125 (SIKAAVPGNTSTPSCQSTNGQPQRGACGRWRGRSRSRRAATSR) is disordered. Over residues 90-104 (GNTSTPSCQSTNGQP) the composition is skewed to polar residues. N-linked (GlcNAc...) asparagine glycosylation occurs at Asn91. Basic residues predominate over residues 112–122 (WRGRSRSRRAA). The Peptidase M12A domain occupies 121–320 (AATSRPERVW…AQARKLYKCP (200 aa)). Asn142 is a glycosylation site (N-linked (GlcNAc...) asparagine). Cystine bridges form between Cys163/Cys319, Cys183/Cys205, Cys185/Cys186, and Cys322/Cys348. His213 is a Zn(2+) binding site. Residue Glu214 is part of the active site. The Zn(2+) site is built by His217 and His223. CUB domains follow at residues 322-434 (CGET…YEAI) and 435-546 (CGGD…NFFK). N-linked (GlcNAc...) asparagine glycosylation is found at Asn332 and Asn363. Cystine bridges form between Cys375–Cys397, Cys435–Cys461, Cys488–Cys510, Cys551–Cys563, Cys559–Cys572, Cys574–Cys587, Cys591–Cys617, Cys644–Cys666, Cys707–Cys718, Cys714–Cys727, Cys729–Cys742, Cys747–Cys773, Cys800–Cys822, Cys860–Cys890, and Cys917–Cys939. An EGF-like 1; calcium-binding domain is found at 547–588 (EVDECSRPNRGGCEQRCLNTLGSYKCSCDPGYELAPDKRRCE). Residues 591-703 (CGGFLTKLNG…KGFKAHFFSD (113 aa)) form the CUB 3 domain. Asn599 carries N-linked (GlcNAc...) asparagine glycosylation. The EGF-like 2; calcium-binding domain maps to 704–743 (KDECSKDNGGCQQDCVNTFGSYECQCRSGFVLHDNKHDCK). 2 consecutive CUB domains span residues 747–859 (CDHK…HATE) and 860–976 (CGGQ…YTST). Arg934 and Arg937 each carry omega-N-methylarginine.

As to quaternary structure, interacts with POSTN, the interaction promotes deposition on the extracellular matrix. Zn(2+) is required as a cofactor. Post-translationally, proteolytically activated in the trans-Golgi network by furin-like/paired basic proprotein convertases, cleavage is not required for secretion. Ubiquitous.

It localises to the golgi apparatus. It is found in the trans-Golgi network. Its subcellular location is the secreted. The protein localises to the extracellular space. The protein resides in the extracellular matrix. The enzyme catalyses Cleavage of the C-terminal propeptide at Ala-|-Asp in type I and II procollagens and at Arg-|-Asp in type III.. Its activity is regulated as follows. Activity is increased by the procollagen C-endopeptidase enhancer protein. Its function is as follows. Metalloprotease that plays key roles in regulating the formation of the extracellular matrix (ECM) via processing of various precursor proteins into mature functional enzymes or structural proteins. Thereby participates in several developmental and physiological processes such as cartilage and bone formation, muscle growth and homeostasis, wound healing and tissue repair. Roles in ECM formation include cleavage of the C-terminal propeptides from procollagens such as procollagen I, II and III or the proteolytic activation of the enzyme lysyl oxidase LOX, necessary to formation of covalent cross-links in collagen and elastic fibers. Additional substrates include matricellular thrombospondin-1/THBS1 whose cleavage leads to cell adhesion disruption and TGF-beta activation. Functionally, plays an important role in bone repair by acting as a coactivator of BMP7. This Homo sapiens (Human) protein is Bone morphogenetic protein 1 (BMP1).